The following is a 444-amino-acid chain: DNA repair protein RadA (444 aa).

The segment at 8 to 25 adopts a C4-type zinc-finger fold; the sequence is CSNCGNISPKWSGQCFDC. 89–96 contacts ATP; sequence GDPGIGKS. A RadA KNRFG motif motif is present at residues 248–252; that stretch reads KNRFG. The lon-protease-like stretch occupies residues 347 to 444; sequence EVYLSIAGGL…HLKDLKEIIK (98 aa).

Belongs to the RecA family. RadA subfamily.

Its function is as follows. DNA-dependent ATPase involved in processing of recombination intermediates, plays a role in repairing DNA breaks. Stimulates the branch migration of RecA-mediated strand transfer reactions, allowing the 3' invading strand to extend heteroduplex DNA faster. Binds ssDNA in the presence of ADP but not other nucleotides, has ATPase activity that is stimulated by ssDNA and various branched DNA structures, but inhibited by SSB. Does not have RecA's homology-searching function. This chain is DNA repair protein RadA, found in Rickettsia conorii (strain ATCC VR-613 / Malish 7).